The chain runs to 207 residues: Ribonuclease HII (207 aa).

The RNase H type-2 domain maps to 19 to 207; sequence HCIAGVDEVG…PVKKALGIEE (189 aa). Residues D25, E26, and D117 each coordinate a divalent metal cation.

Belongs to the RNase HII family. Requires Mn(2+) as cofactor. Mg(2+) is required as a cofactor.

The protein localises to the cytoplasm. It catalyses the reaction Endonucleolytic cleavage to 5'-phosphomonoester.. Its function is as follows. Endonuclease that specifically degrades the RNA of RNA-DNA hybrids. In Vibrio vulnificus (strain CMCP6), this protein is Ribonuclease HII.